Here is a 1637-residue protein sequence, read N- to C-terminus: Surface protein (1637 aa).

Residues 1–48 form the signal peptide; that stretch reads MNKNSKKKLDFLPNKLNKYSIRRFTVGTASILVGATLIFGVANDQAEA. Disordered regions lie at residues 49–305, 689–719, and 739–1611; these read AENN…RTQV, VQKGEDGEKTTTTPTKVDPDTGDVVERGEPT, and PQGH…NGTL. Residues 56–65 are compositionally biased toward basic and acidic residues; sequence KQDDSSDASK. Positions 69 to 83 are enriched in polar residues; that stretch reads NVQTIEQSSANSNES. 3 stretches are compositionally biased toward basic and acidic residues: residues 90–106, 127–180, and 188–264; these read DVTKDTTEQASTEEKAN, EAPK…KATT, and ETSK…KVET. Over residues 289–298 the composition is skewed to polar residues; it reads AKSNSNAQPS. 5 G5 domains span residues 654 to 737, 783 to 865, 911 to 993, 1039 to 1121, and 1167 to 1250; these read QADL…TPEE, HGPK…GGEE, and HGPK…APEI. The span at 779–817 shows a compositional bias: basic and acidic residues; the sequence is DVTKHGPKAGEPEVTKEEIPFEKKREFNPDLKPGEEKVT. The segment covering 818 to 832 has biased composition (low complexity); it reads QEGQTGEKTTTTPTT. The segment covering 907 to 945 has biased composition (basic and acidic residues); that stretch reads DVTKHGPKAGEPEVTKEEIPFEKKREFNPDLKPGEEKVT. Positions 946–960 are enriched in low complexity; sequence QEGQTGEKTTTTPTT. Residues 1035-1073 are compositionally biased toward basic and acidic residues; it reads DVTKHGPKAGEPEVTKEEIPFEKKREFNPDLKPGEEKVT. A compositionally biased stretch (low complexity) spans 1074 to 1088; that stretch reads QEGQTGEKTTTTPTT. Residues 1163–1189 show a composition bias toward basic and acidic residues; the sequence is DVTKHGPKAGEPEVTKEEIPYETKRVL. Acidic residues-rich tracts occupy residues 1282-1291 and 1302-1580; these read TGEIIEEPQD and SDAD…DSDS. 141 consecutive repeat copies span residues 1301–1302, 1303–1304, 1305–1306, 1307–1308, 1309–1310, 1311–1312, 1313–1314, 1315–1316, 1317–1318, 1319–1320, 1321–1322, 1323–1324, 1325–1326, 1327–1328, 1329–1330, 1331–1332, 1333–1334, 1335–1336, 1337–1338, 1339–1340, 1341–1342, 1343–1344, 1345–1346, 1347–1348, 1349–1350, 1351–1352, 1353–1354, 1355–1356, 1357–1358, 1359–1360, 1361–1362, 1363–1364, 1365–1366, 1367–1368, 1369–1370, 1371–1372, 1373–1374, 1375–1376, 1377–1378, 1379–1380, 1381–1382, 1383–1384, 1385–1386, 1387–1388, 1389–1390, 1391–1392, 1393–1394, 1395–1396, 1397–1398, 1399–1400, 1401–1402, 1403–1404, 1405–1406, 1407–1408, 1409–1410, 1411–1412, 1413–1414, 1415–1416, 1417–1418, 1419–1420, 1421–1422, 1423–1424, 1425–1426, 1427–1428, 1429–1430, 1431–1432, 1433–1434, 1435–1436, 1437–1438, 1439–1440, 1441–1442, 1443–1444, 1445–1446, 1447–1448, 1449–1450, 1451–1452, 1453–1454, 1455–1456, 1457–1458, 1459–1460, 1461–1462, 1463–1464, 1465–1466, 1467–1468, 1469–1470, 1471–1472, 1473–1474, 1475–1476, 1477–1478, 1479–1480, 1481–1482, 1483–1484, 1485–1486, 1487–1488, 1489–1490, 1491–1492, 1493–1494, 1495–1496, 1497–1498, 1499–1500, 1501–1502, 1503–1504, 1505–1506, 1507–1508, 1509–1510, 1511–1512, 1513–1514, 1515–1516, 1517–1518, 1519–1520, 1521–1522, 1523–1524, 1525–1526, 1527–1528, 1529–1530, 1531–1532, 1533–1534, 1535–1536, 1537–1538, 1539–1540, 1541–1542, 1543–1544, 1545–1546, 1547–1548, 1549–1550, 1551–1552, 1553–1554, 1555–1556, 1557–1558, 1559–1560, 1561–1562, 1563–1564, 1565–1566, 1567–1568, 1569–1570, 1571–1572, 1573–1574, 1575–1576, 1577–1578, 1579–1580, and 1581–1582. Positions 1301–1582 are 141 X 2 AA tandem repeats of D-[SAG]; sequence DSDADSDSDA…DSDSDSDSDA (282 aa). Residues 1581 to 1599 show a composition bias toward basic and acidic residues; that stretch reads DADRDHNDKTDKPNNKELP. The LPXTG sorting signal motif lies at 1598–1602; that stretch reads LPDTG. Thr-1601 carries the pentaglycyl murein peptidoglycan amidated threonine modification. The propeptide at 1602-1637 is removed by sortase; sequence GNDAQNNGTLFGSLFAALGGLFLVGRRRKNKNNEEK.

The protein localises to the secreted. Its subcellular location is the cell wall. Functionally, could have a role in preventing adhesion at some stages during an infection. The protein is Surface protein (pls) of Staphylococcus aureus.